The sequence spans 1229 residues: Pesticidal crystal protein Cry1Bb (1229 aa).

The protein belongs to the delta endotoxin family.

Functionally, promotes colloidosmotic lysis by binding to the midgut epithelial cells of many lepidopteran larvae. The sequence is that of Pesticidal crystal protein Cry1Bb (cry1Bb) from Bacillus thuringiensis.